Here is a 522-residue protein sequence, read N- to C-terminus: Nitrogen fixation protein VnfA (522 aa).

The a domain stretch occupies residues leucine 22–glutamate 183. One can recognise a GAF domain in the interval aspartate 35–valine 177. One can recognise a Sigma-54 factor interaction domain in the interval isoleucine 210–leucine 439. ATP is bound by residues glycine 238–glutamate 245 and alanine 301–glutamate 310. A DNA-binding region (H-T-H motif) is located at residues methionine 493–glycine 512.

Functionally, required for the expression of the V-dependent nitrogen fixation system in Azotobacter vinelandii. It is required for the regulation of nitrogenase 2 transcription. Interacts with sigma-54. The protein is Nitrogen fixation protein VnfA (vnfA) of Azotobacter vinelandii.